The chain runs to 499 residues: Maturase K (499 aa).

This sequence belongs to the intron maturase 2 family. MatK subfamily.

The protein localises to the plastid. The protein resides in the chloroplast. Usually encoded in the trnK tRNA gene intron. Probably assists in splicing its own and other chloroplast group II introns. This chain is Maturase K, found in Gleditsia triacanthos (Common honey-locust).